A 156-amino-acid polypeptide reads, in one-letter code: Probable succinate transporter subunit YjjB (156 aa).

A run of 4 helical transmembrane segments spans residues 7–27 (WALLQDMVLAAVPALGFAMVF), 54–74 (FGMNIEWASFLAAILIGIIGI), 86–106 (VFTVAAVIPMFPGISAYTAMI), and 128–148 (FLKASFIVGALSIGLSLPGIW).

The protein belongs to the ThrE exporter (TC 2.A.79) family. The transporter is composed of YjjB and YjjP.

The protein resides in the cell inner membrane. Its function is as follows. Involved in succinate export with YjjP. Both proteins are required for export. The chain is Probable succinate transporter subunit YjjB from Pectobacterium atrosepticum (strain SCRI 1043 / ATCC BAA-672) (Erwinia carotovora subsp. atroseptica).